The primary structure comprises 551 residues: Methionine--tRNA ligase (551 aa).

Residues Pro-12 to His-22 carry the 'HIGH' region motif. Residues Cys-144, Cys-147, Cys-157, and Cys-160 each contribute to the Zn(2+) site. The 'KMSKS' region motif lies at Gln-330 to Ser-334. Lys-333 contributes to the ATP binding site.

Belongs to the class-I aminoacyl-tRNA synthetase family. MetG type 1 subfamily. As to quaternary structure, monomer. The cofactor is Zn(2+).

Its subcellular location is the cytoplasm. It carries out the reaction tRNA(Met) + L-methionine + ATP = L-methionyl-tRNA(Met) + AMP + diphosphate. Its function is as follows. Is required not only for elongation of protein synthesis but also for the initiation of all mRNA translation through initiator tRNA(fMet) aminoacylation. This is Methionine--tRNA ligase from Chlamydia abortus (strain DSM 27085 / S26/3) (Chlamydophila abortus).